Reading from the N-terminus, the 326-residue chain is Protein phosphatase PTC7 homolog fig (326 aa).

Positions 40 to 83 (VQGKSKPRSPHLTSPQCSPEHRPRRFRPPSASGRTAFSSAPRPK) are disordered. Residues 64–314 (RFRPPSASGR…DDITVVLASV (251 aa)) enclose the PPM-type phosphatase domain. The Mn(2+) site is built by D91, G92, and D236.

The protein belongs to the PP2C family. The cofactor is Mg(2+). Requires Mn(2+) as cofactor.

It carries out the reaction O-phospho-L-seryl-[protein] + H2O = L-seryl-[protein] + phosphate. The catalysed reaction is O-phospho-L-threonyl-[protein] + H2O = L-threonyl-[protein] + phosphate. This is Protein phosphatase PTC7 homolog fig from Drosophila persimilis (Fruit fly).